Here is a 240-residue protein sequence, read N- to C-terminus: Protein Thf1 (240 aa).

The stretch at 186–222 forms a coiled coil; that stretch reads KDLDLYRSNLEKVDQLLKVLEDAAEAERKKKEKQAAS. The interval 212–240 is disordered; the sequence is ERKKKEKQAASTTPAIEEAPVTTAESSES.

This sequence belongs to the THF1 family.

Functionally, may be involved in photosynthetic membrane biogenesis. In Synechocystis sp. (strain ATCC 27184 / PCC 6803 / Kazusa), this protein is Protein Thf1.